Consider the following 460-residue polypeptide: Fumarate hydratase class II (460 aa).

Substrate contacts are provided by residues 95 to 97 (SGT), 126 to 129 (HPND), 136 to 138 (SSN), and threonine 184. The active-site Proton donor/acceptor is the histidine 185. Serine 315 is an active-site residue. Substrate is bound by residues serine 316 and 321–323 (KVN).

Belongs to the class-II fumarase/aspartase family. Fumarase subfamily. As to quaternary structure, homotetramer.

It localises to the cytoplasm. The enzyme catalyses (S)-malate = fumarate + H2O. It participates in carbohydrate metabolism; tricarboxylic acid cycle; (S)-malate from fumarate: step 1/1. Involved in the TCA cycle. Catalyzes the stereospecific interconversion of fumarate to L-malate. The protein is Fumarate hydratase class II of Chlamydia pneumoniae (Chlamydophila pneumoniae).